Reading from the N-terminus, the 250-residue chain is Small ribosomal subunit protein uS2 (250 aa).

It belongs to the universal ribosomal protein uS2 family.

This chain is Small ribosomal subunit protein uS2, found in Marinobacter nauticus (strain ATCC 700491 / DSM 11845 / VT8) (Marinobacter aquaeolei).